The sequence spans 984 residues: Probable beta-galactosidase C (984 aa).

A signal peptide spans 1 to 19 (MRLLNIFTTLCLLLWSGAA). Substrate contacts are provided by tyrosine 78, asparagine 123, alanine 124, glutamate 125, and asparagine 183. Glutamate 184 serves as the catalytic Proton donor. Position 247 (tyrosine 247) interacts with substrate. A disulfide bond links cysteine 253 and cysteine 300. Residue asparagine 272 is glycosylated (N-linked (GlcNAc...) asparagine). The active-site Nucleophile is glutamate 283. Tyrosine 349 is a substrate binding site. Asparagine 387, asparagine 433, asparagine 462, asparagine 516, asparagine 583, asparagine 599, asparagine 673, asparagine 716, asparagine 756, asparagine 860, and asparagine 870 each carry an N-linked (GlcNAc...) asparagine glycan.

Belongs to the glycosyl hydrolase 35 family.

It localises to the secreted. It carries out the reaction Hydrolysis of terminal non-reducing beta-D-galactose residues in beta-D-galactosides.. Its function is as follows. Cleaves beta-linked terminal galactosyl residues from gangliosides, glycoproteins, and glycosaminoglycans. This is Probable beta-galactosidase C (lacC) from Sclerotinia sclerotiorum (strain ATCC 18683 / 1980 / Ss-1) (White mold).